Consider the following 231-residue polypeptide: Probable septum site-determining protein MinC (231 aa).

Positions 102–125 (KEKAPRPAPAPQAPAQNTTPVTKT) are disordered.

This sequence belongs to the MinC family. Interacts with MinD and FtsZ.

Functionally, cell division inhibitor that blocks the formation of polar Z ring septums. Rapidly oscillates between the poles of the cell to destabilize FtsZ filaments that have formed before they mature into polar Z rings. Prevents FtsZ polymerization. The sequence is that of Probable septum site-determining protein MinC from Escherichia coli O6:K15:H31 (strain 536 / UPEC).